A 400-amino-acid chain; its full sequence is Acetate kinase (400 aa).

Mg(2+) is bound at residue Asn-10. Lys-17 provides a ligand contact to ATP. Position 91 (Arg-91) interacts with substrate. The Proton donor/acceptor role is filled by Asp-150. Residues 210-214 (HLGNG), 285-287 (DCR), and 333-337 (GIGEN) each bind ATP. Mg(2+) is bound at residue Glu-387.

The protein belongs to the acetokinase family. As to quaternary structure, homodimer. Requires Mg(2+) as cofactor. Mn(2+) is required as a cofactor.

Its subcellular location is the cytoplasm. The catalysed reaction is acetate + ATP = acetyl phosphate + ADP. It functions in the pathway metabolic intermediate biosynthesis; acetyl-CoA biosynthesis; acetyl-CoA from acetate: step 1/2. Catalyzes the formation of acetyl phosphate from acetate and ATP. Can also catalyze the reverse reaction. In Proteus mirabilis (strain HI4320), this protein is Acetate kinase.